A 185-amino-acid chain; its full sequence is Large ribosomal subunit protein uL5 (185 aa).

Belongs to the universal ribosomal protein uL5 family. In terms of assembly, part of the 50S ribosomal subunit; part of the 5S rRNA/L5/L18/L25 subcomplex. Contacts the 5S rRNA and the P site tRNA. Forms a bridge to the 30S subunit in the 70S ribosome.

Its function is as follows. This is one of the proteins that bind and probably mediate the attachment of the 5S RNA into the large ribosomal subunit, where it forms part of the central protuberance. In the 70S ribosome it contacts protein S13 of the 30S subunit (bridge B1b), connecting the 2 subunits; this bridge is implicated in subunit movement. Contacts the P site tRNA; the 5S rRNA and some of its associated proteins might help stabilize positioning of ribosome-bound tRNAs. The chain is Large ribosomal subunit protein uL5 from Protochlamydia amoebophila (strain UWE25).